Reading from the N-terminus, the 238-residue chain is Ribonuclease PH (238 aa).

Phosphate contacts are provided by residues Arg86 and 124–126 (GTR).

It belongs to the RNase PH family. As to quaternary structure, homohexameric ring arranged as a trimer of dimers.

The enzyme catalyses tRNA(n+1) + phosphate = tRNA(n) + a ribonucleoside 5'-diphosphate. Phosphorolytic 3'-5' exoribonuclease that plays an important role in tRNA 3'-end maturation. Removes nucleotide residues following the 3'-CCA terminus of tRNAs; can also add nucleotides to the ends of RNA molecules by using nucleoside diphosphates as substrates, but this may not be physiologically important. Probably plays a role in initiation of 16S rRNA degradation (leading to ribosome degradation) during starvation. The chain is Ribonuclease PH from Trichlorobacter lovleyi (strain ATCC BAA-1151 / DSM 17278 / SZ) (Geobacter lovleyi).